We begin with the raw amino-acid sequence, 175 residues long: Ferritin light chain (175 aa).

Ser2 carries the N-acetylserine modification. Residues Gln7–Ala156 enclose the Ferritin-like diiron domain. Fe cation is bound by residues Glu54, Glu57, Glu58, Glu61, and Glu64.

The protein belongs to the ferritin family. As to quaternary structure, oligomer of 24 subunits. There are two types of subunits: L (light) chain and H (heavy) chain. The major chain can be light or heavy, depending on the species and tissue type. The functional molecule forms a roughly spherical shell with a diameter of 12 nm and contains a central cavity into which the insoluble mineral iron core is deposited. Interacts with NCOA4.

It is found in the cytoplasmic vesicle. Its subcellular location is the autophagosome. The protein localises to the cytoplasm. The protein resides in the autolysosome. Its function is as follows. Stores iron in a soluble, non-toxic, readily available form. Important for iron homeostasis. Iron is taken up in the ferrous form and deposited as ferric hydroxides after oxidation. Also plays a role in delivery of iron to cells. Mediates iron uptake in capsule cells of the developing kidney. Delivery to lysosomes by the cargo receptor NCOA4 for autophagic degradation and release or iron. This is Ferritin light chain (FTL) from Canis lupus familiaris (Dog).